We begin with the raw amino-acid sequence, 496 residues long: Lysosomal Pro-X carboxypeptidase (496 aa).

The first 21 residues, 1–21 (MGRRALLLLLLSFLAPWATIA), serve as a signal peptide directing secretion. Residues 22–45 (LRPALRALGSLHLPTNPTSLPAVA) constitute a propeptide that is removed on maturation. N-linked (GlcNAc...) asparagine glycans are attached at residues asparagine 47 and asparagine 101. Serine 179 serves as the catalytic Charge relay system. An SKS domain region spans residues 194 to 334 (HMVVGALAAS…QNIFQALNVY (141 aa)). 4 disulfide bridges follow: cysteine 215-cysteine 372, cysteine 233-cysteine 310, cysteine 264-cysteine 343, and cysteine 364-cysteine 394. Asparagine 317, asparagine 336, and asparagine 345 each carry an N-linked (GlcNAc...) asparagine glycan. The N-linked (GlcNAc...) asparagine glycan is linked to asparagine 415. Active-site charge relay system residues include aspartate 430 and histidine 455.

This sequence belongs to the peptidase S28 family. As to quaternary structure, homodimer. In terms of tissue distribution, highest levels in placenta, lung and liver. Also present in heart, brain, pancreas and kidney.

The protein resides in the lysosome. It carries out the reaction Cleavage of a -Pro-|-Xaa bond to release a C-terminal amino acid.. In terms of biological role, cleaves C-terminal amino acids linked to proline in peptides such as angiotensin II, III and des-Arg9-bradykinin. This cleavage occurs at acidic pH, but enzymatic activity is retained with some substrates at neutral pH. The sequence is that of Lysosomal Pro-X carboxypeptidase (PRCP) from Homo sapiens (Human).